Here is a 129-residue protein sequence, read N- to C-terminus: Small ribosomal subunit protein uS9 (129 aa).

The protein belongs to the universal ribosomal protein uS9 family.

The sequence is that of Small ribosomal subunit protein uS9 from Chlorobium phaeobacteroides (strain DSM 266 / SMG 266 / 2430).